Here is a 419-residue protein sequence, read N- to C-terminus: Serine--tRNA ligase (419 aa).

Residue Thr226–Glu228 coordinates L-serine. ATP contacts are provided by residues Arg257–Glu259 and Val273. Glu280 contacts L-serine. Glu344–Ser347 is an ATP binding site. An L-serine-binding site is contributed by Thr379.

Belongs to the class-II aminoacyl-tRNA synthetase family. Type-1 seryl-tRNA synthetase subfamily. Homodimer. The tRNA molecule binds across the dimer.

It is found in the cytoplasm. It carries out the reaction tRNA(Ser) + L-serine + ATP = L-seryl-tRNA(Ser) + AMP + diphosphate + H(+). The catalysed reaction is tRNA(Sec) + L-serine + ATP = L-seryl-tRNA(Sec) + AMP + diphosphate + H(+). The protein operates within aminoacyl-tRNA biosynthesis; selenocysteinyl-tRNA(Sec) biosynthesis; L-seryl-tRNA(Sec) from L-serine and tRNA(Sec): step 1/1. Functionally, catalyzes the attachment of serine to tRNA(Ser). Is also able to aminoacylate tRNA(Sec) with serine, to form the misacylated tRNA L-seryl-tRNA(Sec), which will be further converted into selenocysteinyl-tRNA(Sec). This Corynebacterium efficiens (strain DSM 44549 / YS-314 / AJ 12310 / JCM 11189 / NBRC 100395) protein is Serine--tRNA ligase.